The sequence spans 240 residues: Ornithine decarboxylase antizyme (240 aa).

Disordered stretches follow at residues 18–45 and 69–95; these read RSEP…SSAG and DHDR…SSEF. Residues 21–33 show a composition bias toward polar residues; it reads PISSSNRATKRTI. Low complexity predominate over residues 34–43; sequence SSSSSSSSSS. A compositionally biased stretch (basic and acidic residues) spans 69–84; it reads DHDRASPLKEYNRKTS. Residues 85 to 95 are compositionally biased toward polar residues; that stretch reads IDSTTTASSEF.

The protein belongs to the ODC antizyme family. Interacts with ODC1 and thereby sterically blocks ODC homodimerization. As to expression, preferentially expressed in adult female midguts.

In terms of biological role, ornithine decarboxylase (ODC) antizyme protein that negatively regulates ODC activity and intracellular polyamine biosynthesis and uptake in response to increased intracellular polyamine levels. Binds to ODC monomers, inhibiting the assembly of the functional ODC homodimer, and targets the monomers for ubiquitin-independent proteolytic destruction by the 26S proteasome. This chain is Ornithine decarboxylase antizyme (Oda), found in Aedes aegypti (Yellowfever mosquito).